Here is a 712-residue protein sequence, read N- to C-terminus: Polyribonucleotide nucleotidyltransferase (712 aa).

Residues Asp485 and Asp491 each coordinate Mg(2+). A KH domain is found at 552-611 (PKITTISVPKEKIRDVIGQGGKVIREIVEYSGAKIDINDDGTIMIAASSEDQATRAIERI). Residues 621 to 689 (GAIYTGKVVK…DRGKVKLSMR (69 aa)) enclose the S1 motif domain.

Belongs to the polyribonucleotide nucleotidyltransferase family. Requires Mg(2+) as cofactor.

The protein localises to the cytoplasm. The catalysed reaction is RNA(n+1) + phosphate = RNA(n) + a ribonucleoside 5'-diphosphate. Its function is as follows. Involved in mRNA degradation. Catalyzes the phosphorolysis of single-stranded polyribonucleotides processively in the 3'- to 5'-direction. This Gluconacetobacter diazotrophicus (strain ATCC 49037 / DSM 5601 / CCUG 37298 / CIP 103539 / LMG 7603 / PAl5) protein is Polyribonucleotide nucleotidyltransferase.